Here is a 236-residue protein sequence, read N- to C-terminus: 2,3,4,5-tetrahydropyridine-2,6-dicarboxylate N-acetyltransferase (236 aa).

Belongs to the transferase hexapeptide repeat family. DapH subfamily.

The catalysed reaction is (S)-2,3,4,5-tetrahydrodipicolinate + acetyl-CoA + H2O = L-2-acetamido-6-oxoheptanedioate + CoA. The protein operates within amino-acid biosynthesis; L-lysine biosynthesis via DAP pathway; LL-2,6-diaminopimelate from (S)-tetrahydrodipicolinate (acetylase route): step 1/3. Its function is as follows. Catalyzes the transfer of an acetyl group from acetyl-CoA to tetrahydrodipicolinate. This Geobacillus kaustophilus (strain HTA426) protein is 2,3,4,5-tetrahydropyridine-2,6-dicarboxylate N-acetyltransferase.